A 154-amino-acid chain; its full sequence is Lipoprotein signal peptidase (154 aa).

3 consecutive transmembrane segments (helical) span residues V7–I27, I58–V78, and N88–D108. Residues D117 and D133 contribute to the active site. Residues I128–I148 form a helical membrane-spanning segment.

This sequence belongs to the peptidase A8 family.

It is found in the cell membrane. The catalysed reaction is Release of signal peptides from bacterial membrane prolipoproteins. Hydrolyzes -Xaa-Yaa-Zaa-|-(S,diacylglyceryl)Cys-, in which Xaa is hydrophobic (preferably Leu), and Yaa (Ala or Ser) and Zaa (Gly or Ala) have small, neutral side chains.. It participates in protein modification; lipoprotein biosynthesis (signal peptide cleavage). Functionally, this protein specifically catalyzes the removal of signal peptides from prolipoproteins. This Lactobacillus gasseri (strain ATCC 33323 / DSM 20243 / BCRC 14619 / CIP 102991 / JCM 1131 / KCTC 3163 / NCIMB 11718 / NCTC 13722 / AM63) protein is Lipoprotein signal peptidase.